The chain runs to 426 residues: Histidine--tRNA ligase (426 aa).

The protein belongs to the class-II aminoacyl-tRNA synthetase family. As to quaternary structure, homodimer.

The protein resides in the cytoplasm. The enzyme catalyses tRNA(His) + L-histidine + ATP = L-histidyl-tRNA(His) + AMP + diphosphate + H(+). The protein is Histidine--tRNA ligase of Streptococcus agalactiae serotype Ia (strain ATCC 27591 / A909 / CDC SS700).